A 59-amino-acid chain; its full sequence is UPF0291 protein CPR_1073 (59 aa).

The tract at residues Met1 to Arg30 is disordered.

Belongs to the UPF0291 family.

The protein localises to the cytoplasm. This chain is UPF0291 protein CPR_1073, found in Clostridium perfringens (strain SM101 / Type A).